The sequence spans 268 residues: Deoxyuridine 5'-triphosphate nucleotidohydrolase (268 aa).

Residues 172–174 (RSS) and 263–264 (FG) contribute to the substrate site.

The protein belongs to the dUTPase family. Requires Mg(2+) as cofactor.

It carries out the reaction dUTP + H2O = dUMP + diphosphate + H(+). Involved in nucleotide metabolism: produces dUMP, the immediate precursor of thymidine nucleotides and decreases the intracellular concentration of dUTP to avoid uracil incorporation into viral DNA. This is Deoxyuridine 5'-triphosphate nucleotidohydrolase from Suid herpesvirus 1 (strain Kaplan) (SuHV-1).